The following is a 185-amino-acid chain: Ribosome-recycling factor (185 aa).

It belongs to the RRF family.

Its subcellular location is the cytoplasm. Responsible for the release of ribosomes from messenger RNA at the termination of protein biosynthesis. May increase the efficiency of translation by recycling ribosomes from one round of translation to another. The chain is Ribosome-recycling factor from Listeria innocua serovar 6a (strain ATCC BAA-680 / CLIP 11262).